We begin with the raw amino-acid sequence, 220 residues long: NADH-quinone oxidoreductase subunit I (220 aa).

4Fe-4S ferredoxin-type domains lie at 71–102 (LQRL…IITH) and 112–141 (DSYT…MGNR). Positions 82, 85, 88, 92, 121, 124, 127, and 131 each coordinate [4Fe-4S] cluster. The tract at residues 187 to 220 (MQATPLDYVQEPSKEESQEETPTNPESNKGDENV) is disordered.

The protein belongs to the complex I 23 kDa subunit family. As to quaternary structure, NDH-1 is composed of 14 different subunits. Subunits NuoA, H, J, K, L, M, N constitute the membrane sector of the complex. It depends on [4Fe-4S] cluster as a cofactor.

The protein resides in the cell inner membrane. It carries out the reaction a quinone + NADH + 5 H(+)(in) = a quinol + NAD(+) + 4 H(+)(out). NDH-1 shuttles electrons from NADH, via FMN and iron-sulfur (Fe-S) centers, to quinones in the respiratory chain. The immediate electron acceptor for the enzyme in this species is believed to be ubiquinone. Couples the redox reaction to proton translocation (for every two electrons transferred, four hydrogen ions are translocated across the cytoplasmic membrane), and thus conserves the redox energy in a proton gradient. This chain is NADH-quinone oxidoreductase subunit I, found in Helicobacter pylori (strain ATCC 700392 / 26695) (Campylobacter pylori).